A 172-amino-acid chain; its full sequence is MVDKRESYTKEDLLASGRGELFGAKGPQLPAPNMLMMDRVIKMSETGGNYDKGYVEAELDINPDLWFFGCHFIGDPVMPGCLGLDAMWQLVGFYLGWLGGEGKGRALGVGEVKFTGQVLPTAKKVTYRIHFKRIVNRRLIMGLADGEVLVDDRLIYTANDLKVGLFQDTSAF.

The active site involves His-71.

The protein belongs to the thioester dehydratase family. FabA subfamily. In terms of assembly, homodimer.

The protein resides in the cytoplasm. The enzyme catalyses a (3R)-hydroxyacyl-[ACP] = a (2E)-enoyl-[ACP] + H2O. It carries out the reaction (3R)-hydroxydecanoyl-[ACP] = (2E)-decenoyl-[ACP] + H2O. It catalyses the reaction (2E)-decenoyl-[ACP] = (3Z)-decenoyl-[ACP]. It participates in lipid metabolism; fatty acid biosynthesis. Functionally, necessary for the introduction of cis unsaturation into fatty acids. Catalyzes the dehydration of (3R)-3-hydroxydecanoyl-ACP to E-(2)-decenoyl-ACP and then its isomerization to Z-(3)-decenoyl-ACP. Can catalyze the dehydratase reaction for beta-hydroxyacyl-ACPs with saturated chain lengths up to 16:0, being most active on intermediate chain length. The polypeptide is 3-hydroxydecanoyl-[acyl-carrier-protein] dehydratase (Klebsiella pneumoniae (strain 342)).